The sequence spans 663 residues: UvrABC system protein B (663 aa).

The Helicase ATP-binding domain maps to 31–271 (DNIEGGEKAQ…EQSISKIQAE (241 aa)). Position 44–51 (44–51 (GATGTGKT)) interacts with ATP. A Beta-hairpin motif is present at residues 97-120 (YYDYYQPEAYVPSSDTYIEKDSSV). Residues 435–601 (QMDDLLGEIN…TIKKDIRDLI (167 aa)) enclose the Helicase C-terminal domain. The UVR domain occupies 627 to 662 (QEAIKQLQKNMQEAAELLDFELAAQLRDLILELKAM).

Belongs to the UvrB family. Forms a heterotetramer with UvrA during the search for lesions. Interacts with UvrC in an incision complex.

It localises to the cytoplasm. In terms of biological role, the UvrABC repair system catalyzes the recognition and processing of DNA lesions. A damage recognition complex composed of 2 UvrA and 2 UvrB subunits scans DNA for abnormalities. Upon binding of the UvrA(2)B(2) complex to a putative damaged site, the DNA wraps around one UvrB monomer. DNA wrap is dependent on ATP binding by UvrB and probably causes local melting of the DNA helix, facilitating insertion of UvrB beta-hairpin between the DNA strands. Then UvrB probes one DNA strand for the presence of a lesion. If a lesion is found the UvrA subunits dissociate and the UvrB-DNA preincision complex is formed. This complex is subsequently bound by UvrC and the second UvrB is released. If no lesion is found, the DNA wraps around the other UvrB subunit that will check the other stand for damage. The protein is UvrABC system protein B of Streptococcus equi subsp. zooepidemicus (strain H70).